The primary structure comprises 2057 residues: Rho guanine nucleotide exchange factor 17 (2057 aa).

3 disordered regions span residues 20–361 (ERWS…DTGG), 375–461 (LASP…SNPD), and 481–559 (RVRK…LKPS). Phosphoserine is present on residues Ser-142 and Ser-152. Positions 227-249 (ARASSSSSIASSYPVSRSRAASS) are enriched in low complexity. Residues Ser-305 and Ser-308 each carry the phosphoserine modification. The segment covering 314–323 (GGLGSAGGVG) has biased composition (gly residues). 7 positions are modified to phosphoserine: Ser-324, Ser-330, Ser-377, Ser-381, Ser-389, Ser-404, and Ser-414. Residues 382–391 (RGSSRYSSTE) show a composition bias toward polar residues. A compositionally biased stretch (basic and acidic residues) spans 440–451 (PLRDGGLDLDKN). The residue at position 456 (Ser-456) is a Phosphoserine. The span at 507–524 (EQSESTLSQSPTSPTTRP) shows a compositional bias: low complexity. 2 positions are modified to phosphoserine: Ser-538 and Ser-611. 2 disordered regions span residues 615 to 647 (AGDM…PEPL) and 663 to 952 (LSST…VRHA). Residues 663-672 (LSSTSAQTNH) are compositionally biased toward polar residues. Ser-689 is subject to Phosphoserine. A phosphothreonine mark is found at Thr-692 and Thr-695. Residues 710–719 (PNGTELSNGE) are compositionally biased toward polar residues. At Ser-728 the chain carries Phosphoserine. The segment covering 747–760 (SVDSNLLGSLNSKT) has biased composition (polar residues). Residues 820–829 (SLSDPSRRGE) show a composition bias toward basic and acidic residues. Ser-906 is subject to Phosphoserine. Residues 909–920 (LTRRGSKKRPAR) are compositionally biased toward basic residues. A compositionally biased stretch (basic and acidic residues) spans 922–931 (SHQELRREEG). The span at 933–944 (QDQTGSLTQTRS) shows a compositional bias: polar residues. A phosphoserine mark is found at Ser-953 and Ser-994. Residues 1015-1027 (GPVDLPCLPPSAP) are compositionally biased toward pro residues. A disordered region spans residues 1015–1054 (GPVDLPCLPPSAPPSTETKPSGAARATPDEPAPASKCCSK). The DH domain occupies 1059–1247 (MRKHVTMTLL…KQVAERINKG (189 aa)). Residue Ser-1324 is modified to Phosphoserine. Disordered stretches follow at residues 1555-1713 (RCPR…SSRG) and 1983-2050 (CSTP…DSTN). A compositionally biased stretch (acidic residues) spans 1579–1589 (LDVEATAEEEA). The span at 1638–1674 (SPSPSGTLQSQASQSTISSSFGNEETPSSKEATAETT) shows a compositional bias: low complexity.

Acts as a guanine nucleotide exchange factor (GEF) for RhoA GTPases. This chain is Rho guanine nucleotide exchange factor 17 (Arhgef17), found in Mus musculus (Mouse).